The sequence spans 564 residues: Dihydroxy-acid dehydratase (564 aa).

A [2Fe-2S] cluster-binding site is contributed by cysteine 55. Residue aspartate 87 coordinates Mg(2+). [2Fe-2S] cluster is bound at residue cysteine 128. Aspartate 129 and lysine 130 together coordinate Mg(2+). An N6-carboxylysine modification is found at lysine 130. Position 200 (cysteine 200) interacts with [2Fe-2S] cluster. Glutamate 452 serves as a coordination point for Mg(2+). The active-site Proton acceptor is serine 478.

It belongs to the IlvD/Edd family. In terms of assembly, homodimer. [2Fe-2S] cluster serves as cofactor. Mg(2+) is required as a cofactor.

The catalysed reaction is (2R)-2,3-dihydroxy-3-methylbutanoate = 3-methyl-2-oxobutanoate + H2O. The enzyme catalyses (2R,3R)-2,3-dihydroxy-3-methylpentanoate = (S)-3-methyl-2-oxopentanoate + H2O. It participates in amino-acid biosynthesis; L-isoleucine biosynthesis; L-isoleucine from 2-oxobutanoate: step 3/4. It functions in the pathway amino-acid biosynthesis; L-valine biosynthesis; L-valine from pyruvate: step 3/4. Functionally, functions in the biosynthesis of branched-chain amino acids. Catalyzes the dehydration of (2R,3R)-2,3-dihydroxy-3-methylpentanoate (2,3-dihydroxy-3-methylvalerate) into 2-oxo-3-methylpentanoate (2-oxo-3-methylvalerate) and of (2R)-2,3-dihydroxy-3-methylbutanoate (2,3-dihydroxyisovalerate) into 2-oxo-3-methylbutanoate (2-oxoisovalerate), the penultimate precursor to L-isoleucine and L-valine, respectively. This Polaromonas sp. (strain JS666 / ATCC BAA-500) protein is Dihydroxy-acid dehydratase.